A 427-amino-acid polypeptide reads, in one-letter code: Trigger factor (427 aa).

A PPIase FKBP-type domain is found at 163 to 248; that stretch reads GDTVVIDFVG…IHEVKEKEVP (86 aa).

The protein belongs to the FKBP-type PPIase family. Tig subfamily.

It localises to the cytoplasm. It carries out the reaction [protein]-peptidylproline (omega=180) = [protein]-peptidylproline (omega=0). Its function is as follows. Involved in protein export. Acts as a chaperone by maintaining the newly synthesized protein in an open conformation. Functions as a peptidyl-prolyl cis-trans isomerase. This chain is Trigger factor, found in Streptococcus gordonii (strain Challis / ATCC 35105 / BCRC 15272 / CH1 / DL1 / V288).